A 390-amino-acid polypeptide reads, in one-letter code: Centrosomal protein of 44 kDa (390 aa).

The binds with microtubules and centrioles stretch occupies residues 11–195; it reads RNLEQVLRLL…ISEDTLSPIT (185 aa). Residues 233 to 269 are a coiled coil; the sequence is EITALQTMLAECQENLKKLTSIEKRLDCLEQKMKGKV. Positions 322-348 are disordered; it reads RKSEVERPASIPLSSGYSTASSDSTPR. Phosphoserine is present on residues S331 and S345. The segment covering 335 to 345 has biased composition (low complexity); the sequence is SSGYSTASSDS. T346 carries the phosphothreonine modification. Residues 361 to 385 adopt a coiled-coil conformation; sequence SEETTIQKMERMKKMFEETAELLKC.

In terms of assembly, interacts with CROCC. Interacts with POC1B; the interaction is direct and recruits POC1B to centriolar microtubules. Binds to centriolar microtubules.

It is found in the cytoplasm. Its subcellular location is the cytoskeleton. The protein localises to the microtubule organizing center. The protein resides in the centrosome. It localises to the centriole. It is found in the spindle pole. Its subcellular location is the midbody. In terms of biological role, centriole-enriched microtubule-binding protein involved in centriole biogenesis. In collaboration with CEP295 and POC1B, is required for the centriole-to-centrosome conversion by ensuring the formation of bona fide centriole wall. Functions as a linker component that maintains centrosome cohesion. Associates with CROCC and regulates its stability and localization to the centrosome. This Homo sapiens (Human) protein is Centrosomal protein of 44 kDa (CEP44).